Consider the following 211-residue polypeptide: Intermembrane phospholipid transport system binding protein MlaC (211 aa).

The first 21 residues, 1-21, serve as a signal peptide directing secretion; the sequence is MFKRLMMVALLVIAPLSAATA.

It belongs to the MlaC/ttg2D family. As to quaternary structure, interacts with the MlaA-OmpF outer membrane complex and with the inner membrane ABC transporter complex MlaFEDB, via direct interaction with MlaD.

It is found in the periplasm. Involved in a phospholipid transport pathway that maintains lipid asymmetry in the outer membrane by retrograde trafficking of phospholipids from the outer membrane to the inner membrane. May transfer phospholipid across the periplasmic space and deliver it to the MlaFEDB complex at the inner membrane. The sequence is that of Intermembrane phospholipid transport system binding protein MlaC from Escherichia coli (strain K12).